The sequence spans 453 residues: Bifunctional protein GlmU (453 aa).

Residues 1 to 231 (MERTCLAVIL…EIEMTGCNNR (231 aa)) form a pyrophosphorylase region. Residues 10-13 (LAAG), K24, Q77, 82-83 (GT), 105-107 (YGD), G143, E157, N172, and N229 each bind UDP-N-acetyl-alpha-D-glucosamine. D107 serves as a coordination point for Mg(2+). A Mg(2+)-binding site is contributed by N229. The segment at 232-252 (AELAVIERFWQERRRREMMLA) is linker. The tract at residues 253–453 (GVTMIAPETV…AIKAAKKAEA (201 aa)) is N-acetyltransferase. R318 and K336 together coordinate UDP-N-acetyl-alpha-D-glucosamine. The Proton acceptor role is filled by H348. UDP-N-acetyl-alpha-D-glucosamine is bound by residues Y351 and N362. Residues A365, 371–372 (NY), S390, S408, and R425 contribute to the acetyl-CoA site.

This sequence in the N-terminal section; belongs to the N-acetylglucosamine-1-phosphate uridyltransferase family. In the C-terminal section; belongs to the transferase hexapeptide repeat family. As to quaternary structure, homotrimer. It depends on Mg(2+) as a cofactor.

The protein localises to the cytoplasm. It carries out the reaction alpha-D-glucosamine 1-phosphate + acetyl-CoA = N-acetyl-alpha-D-glucosamine 1-phosphate + CoA + H(+). The enzyme catalyses N-acetyl-alpha-D-glucosamine 1-phosphate + UTP + H(+) = UDP-N-acetyl-alpha-D-glucosamine + diphosphate. The protein operates within nucleotide-sugar biosynthesis; UDP-N-acetyl-alpha-D-glucosamine biosynthesis; N-acetyl-alpha-D-glucosamine 1-phosphate from alpha-D-glucosamine 6-phosphate (route II): step 2/2. It functions in the pathway nucleotide-sugar biosynthesis; UDP-N-acetyl-alpha-D-glucosamine biosynthesis; UDP-N-acetyl-alpha-D-glucosamine from N-acetyl-alpha-D-glucosamine 1-phosphate: step 1/1. It participates in bacterial outer membrane biogenesis; LPS lipid A biosynthesis. In terms of biological role, catalyzes the last two sequential reactions in the de novo biosynthetic pathway for UDP-N-acetylglucosamine (UDP-GlcNAc). The C-terminal domain catalyzes the transfer of acetyl group from acetyl coenzyme A to glucosamine-1-phosphate (GlcN-1-P) to produce N-acetylglucosamine-1-phosphate (GlcNAc-1-P), which is converted into UDP-GlcNAc by the transfer of uridine 5-monophosphate (from uridine 5-triphosphate), a reaction catalyzed by the N-terminal domain. This Rhizobium etli (strain ATCC 51251 / DSM 11541 / JCM 21823 / NBRC 15573 / CFN 42) protein is Bifunctional protein GlmU.